The primary structure comprises 234 residues: Chromatin remodeling protein EBS (234 aa).

In terms of domain architecture, BAH spans Lys29–Arg144. The segment at Ala146–Asp197 adopts a PHD-type zinc-finger fold.

This sequence belongs to the SHL1/EBS protein family. Recognizes di- and trimethylated histone H3 at lysine 4 (H3K4me2 and H3K4me3). Interacts with HDA6. In terms of tissue distribution, expressed ubiquitously, with higher levels in floral buds.

The protein localises to the nucleus. Functionally, chromatin remodeling factor that binds to methylated histone (e.g. H3K4me2/3) to prevent their acetylation (e.g. H3K9K14Ac), likely by recruiting histone deacetylase (HDAC) complexes, and thus regulating the transcription of target genes. Negative regulator in developmental processes in a gibberellic acid- (GA-) dependent manner, such as germination, flowering induction, and flower organ specification, probably by modulating developmental gene expression. Involved in the chromatin-mediated repression of floral initiation and controls genes regulating flowering. Negatively regulates the expression of the floral integrator FT epigenetically, by preventing high levels of H3 acetylation, thus maintaining an inactive chromatin conformation at FT locus. This is Chromatin remodeling protein EBS from Arabidopsis thaliana (Mouse-ear cress).